A 217-amino-acid chain; its full sequence is Thiamine-phosphate synthase (217 aa).

Residues 38-42 (QYRDK) and asparagine 70 each bind 4-amino-2-methyl-5-(diphosphooxymethyl)pyrimidine. The Mg(2+) site is built by aspartate 71 and aspartate 90. Serine 109 is a 4-amino-2-methyl-5-(diphosphooxymethyl)pyrimidine binding site. 136 to 138 (SIT) serves as a coordination point for 2-[(2R,5Z)-2-carboxy-4-methylthiazol-5(2H)-ylidene]ethyl phosphate. Lysine 139 provides a ligand contact to 4-amino-2-methyl-5-(diphosphooxymethyl)pyrimidine. Glycine 166 contributes to the 2-[(2R,5Z)-2-carboxy-4-methylthiazol-5(2H)-ylidene]ethyl phosphate binding site.

Belongs to the thiamine-phosphate synthase family. Mg(2+) serves as cofactor.

The catalysed reaction is 2-[(2R,5Z)-2-carboxy-4-methylthiazol-5(2H)-ylidene]ethyl phosphate + 4-amino-2-methyl-5-(diphosphooxymethyl)pyrimidine + 2 H(+) = thiamine phosphate + CO2 + diphosphate. It carries out the reaction 2-(2-carboxy-4-methylthiazol-5-yl)ethyl phosphate + 4-amino-2-methyl-5-(diphosphooxymethyl)pyrimidine + 2 H(+) = thiamine phosphate + CO2 + diphosphate. It catalyses the reaction 4-methyl-5-(2-phosphooxyethyl)-thiazole + 4-amino-2-methyl-5-(diphosphooxymethyl)pyrimidine + H(+) = thiamine phosphate + diphosphate. The protein operates within cofactor biosynthesis; thiamine diphosphate biosynthesis; thiamine phosphate from 4-amino-2-methyl-5-diphosphomethylpyrimidine and 4-methyl-5-(2-phosphoethyl)-thiazole: step 1/1. Its function is as follows. Condenses 4-methyl-5-(beta-hydroxyethyl)thiazole monophosphate (THZ-P) and 2-methyl-4-amino-5-hydroxymethyl pyrimidine pyrophosphate (HMP-PP) to form thiamine monophosphate (TMP). The polypeptide is Thiamine-phosphate synthase (Nitrosococcus oceani (strain ATCC 19707 / BCRC 17464 / JCM 30415 / NCIMB 11848 / C-107)).